We begin with the raw amino-acid sequence, 150 residues long: Peptidoglycan-associated lipoprotein (150 aa).

The signal sequence occupies residues 1–19 (MKKLTKVLLVAGSVAVLAA). Cys-20 is lipidated: N-palmitoyl cysteine. The S-diacylglycerol cysteine moiety is linked to residue Cys-20. The region spanning 37–150 (SVQDLQQRYN…SKNRRAVLAY (114 aa)) is the OmpA-like domain.

This sequence belongs to the Pal lipoprotein family. As to quaternary structure, the Tol-Pal system is composed of five core proteins: the inner membrane proteins TolA, TolQ and TolR, the periplasmic protein TolB and the outer membrane protein Pal. They form a network linking the inner and outer membranes and the peptidoglycan layer.

It is found in the cell outer membrane. Functionally, part of the Tol-Pal system, which plays a role in outer membrane invagination during cell division and is important for maintaining outer membrane integrity. The sequence is that of Peptidoglycan-associated lipoprotein from Pasteurella multocida (strain Pm70).